A 523-amino-acid polypeptide reads, in one-letter code: Leucine-rich repeat-containing protein 27 (523 aa).

Residues 1–26 (MEDTSPQAVAEKAAKDPKAAKDLKDD) are disordered. Basic and acidic residues predominate over residues 12–26 (KAAKDPKAAKDLKDD). LRR repeat units lie at residues 55–76 (SSPV…FKIP), 77–98 (NLQQ…FFQL), 101–122 (NLTW…IGSH), 124–145 (HLKT…LGQV), and 147–168 (TLTA…IVQK). Disordered stretches follow at residues 206 to 236 (QYPV…ADFF) and 372 to 394 (REQT…HSNM). 2 stretches are compositionally biased toward basic and acidic residues: residues 227 to 236 (DQEKEKADFF) and 372 to 385 (REQT…RELS). Coiled coils occupy residues 335 to 374 (VHAN…WREQ) and 463 to 494 (MQDI…TLNK). Residues 503-523 (GNLSLHPPASQPQNIFFNTKS) are disordered. Polar residues predominate over residues 513–523 (QPQNIFFNTKS).

This chain is Leucine-rich repeat-containing protein 27 (Lrrc27), found in Mus musculus (Mouse).